The sequence spans 479 residues: Ribosomal RNA small subunit methyltransferase F (479 aa).

Residues 125-131 (AAAPGSK), Glu149, Asp176, and Asp194 contribute to the S-adenosyl-L-methionine site. The active-site Nucleophile is the Cys247.

This sequence belongs to the class I-like SAM-binding methyltransferase superfamily. RsmB/NOP family.

The protein resides in the cytoplasm. The catalysed reaction is cytidine(1407) in 16S rRNA + S-adenosyl-L-methionine = 5-methylcytidine(1407) in 16S rRNA + S-adenosyl-L-homocysteine + H(+). Specifically methylates the cytosine at position 1407 (m5C1407) of 16S rRNA. The sequence is that of Ribosomal RNA small subunit methyltransferase F from Escherichia fergusonii (strain ATCC 35469 / DSM 13698 / CCUG 18766 / IAM 14443 / JCM 21226 / LMG 7866 / NBRC 102419 / NCTC 12128 / CDC 0568-73).